The primary structure comprises 388 residues: Chorismate synthase (388 aa).

NADP(+)-binding residues include arginine 39 and arginine 45. FMN contacts are provided by residues 130 to 132 (RSS), 251 to 252 (NA), glycine 296, 311 to 315 (KPIPT), and arginine 337.

This sequence belongs to the chorismate synthase family. Homotetramer. The cofactor is FMNH2.

It carries out the reaction 5-O-(1-carboxyvinyl)-3-phosphoshikimate = chorismate + phosphate. It functions in the pathway metabolic intermediate biosynthesis; chorismate biosynthesis; chorismate from D-erythrose 4-phosphate and phosphoenolpyruvate: step 7/7. Its function is as follows. Catalyzes the anti-1,4-elimination of the C-3 phosphate and the C-6 proR hydrogen from 5-enolpyruvylshikimate-3-phosphate (EPSP) to yield chorismate, which is the branch point compound that serves as the starting substrate for the three terminal pathways of aromatic amino acid biosynthesis. This reaction introduces a second double bond into the aromatic ring system. This is Chorismate synthase from Streptococcus pneumoniae serotype 2 (strain D39 / NCTC 7466).